Reading from the N-terminus, the 109-residue chain is Large ribosomal subunit protein uL22 (109 aa).

Belongs to the universal ribosomal protein uL22 family. As to quaternary structure, part of the 50S ribosomal subunit.

Functionally, this protein binds specifically to 23S rRNA; its binding is stimulated by other ribosomal proteins, e.g. L4, L17, and L20. It is important during the early stages of 50S assembly. It makes multiple contacts with different domains of the 23S rRNA in the assembled 50S subunit and ribosome. In terms of biological role, the globular domain of the protein is located near the polypeptide exit tunnel on the outside of the subunit, while an extended beta-hairpin is found that lines the wall of the exit tunnel in the center of the 70S ribosome. The chain is Large ribosomal subunit protein uL22 from Wolinella succinogenes (strain ATCC 29543 / DSM 1740 / CCUG 13145 / JCM 31913 / LMG 7466 / NCTC 11488 / FDC 602W) (Vibrio succinogenes).